The following is a 304-amino-acid chain: Acetyl-coenzyme A carboxylase carboxyl transferase subunit beta (304 aa).

One can recognise a CoA carboxyltransferase N-terminal domain in the interval 26–295 (VWTKCTSCEQ…PFVEPELVEN (270 aa)). The Zn(2+) site is built by Cys-30, Cys-33, Cys-49, and Cys-52. The C4-type zinc finger occupies 30–52 (CTSCEQVLYRDELRRHLEVCPKC). A disordered region spans residues 281–304 (SNKPSPFVEPELVENEEQSKSDNE).

It belongs to the AccD/PCCB family. Acetyl-CoA carboxylase is a heterohexamer composed of biotin carboxyl carrier protein (AccB), biotin carboxylase (AccC) and two subunits each of ACCase subunit alpha (AccA) and ACCase subunit beta (AccD). Zn(2+) serves as cofactor.

It is found in the cytoplasm. The catalysed reaction is N(6)-carboxybiotinyl-L-lysyl-[protein] + acetyl-CoA = N(6)-biotinyl-L-lysyl-[protein] + malonyl-CoA. It participates in lipid metabolism; malonyl-CoA biosynthesis; malonyl-CoA from acetyl-CoA: step 1/1. In terms of biological role, component of the acetyl coenzyme A carboxylase (ACC) complex. Biotin carboxylase (BC) catalyzes the carboxylation of biotin on its carrier protein (BCCP) and then the CO(2) group is transferred by the transcarboxylase to acetyl-CoA to form malonyl-CoA. This chain is Acetyl-coenzyme A carboxylase carboxyl transferase subunit beta, found in Pasteurella multocida (strain Pm70).